An 85-amino-acid polypeptide reads, in one-letter code: Large ribosomal subunit protein bL27 (85 aa).

It belongs to the bacterial ribosomal protein bL27 family.

The chain is Large ribosomal subunit protein bL27 from Campylobacter hominis (strain ATCC BAA-381 / DSM 21671 / CCUG 45161 / LMG 19568 / NCTC 13146 / CH001A).